Here is a 968-residue protein sequence, read N- to C-terminus: RNA polymerase-associated protein RapA (968 aa).

The region spanning 164 to 334 is the Helicase ATP-binding domain; the sequence is DVGRRHAPRV…FARLRLLDPN (171 aa). Position 177 to 184 (177 to 184) interacts with ATP; that stretch reads DEVGLGKT. A DEAH box motif is present at residues 280–283; that stretch reads DEAH. The region spanning 490–644 is the Helicase C-terminal domain; it reads RVEWLMGYLT…TCPTGRTIYD (155 aa).

Belongs to the SNF2/RAD54 helicase family. RapA subfamily. In terms of assembly, interacts with the RNAP. Has a higher affinity for the core RNAP than for the holoenzyme. Its ATPase activity is stimulated by binding to RNAP.

In terms of biological role, transcription regulator that activates transcription by stimulating RNA polymerase (RNAP) recycling in case of stress conditions such as supercoiled DNA or high salt concentrations. Probably acts by releasing the RNAP, when it is trapped or immobilized on tightly supercoiled DNA. Does not activate transcription on linear DNA. Probably not involved in DNA repair. The chain is RNA polymerase-associated protein RapA from Enterobacter sp. (strain 638).